Consider the following 269-residue polypeptide: Capsid assembly scaffolding protein (269 aa).

Belongs to the T4likevirus capsid assembly scaffolding protein family.

Its subcellular location is the virion. Functionally, scaffolding protein involved in the icosahedric procapsid assembly. Coassembles with the capsid proteins to form the procapsid, in which the scaffolding protein is found within the external shell of icosahedrally arranged capsid protein subunits. In a subsequent step the scaffolding protein molecules are cleaved by the viral protease and released, except for the internal peptide VII. Its function is as follows. Cleavage product of Gp22 that is incorporated into the mature phage head. The sequence is that of Capsid assembly scaffolding protein (22) from Escherichia phage AR1 (Bacteriophage AR1).